We begin with the raw amino-acid sequence, 1914 residues long: Fatty acid synthase beta subunit stcK (1914 aa).

The tract at residues 17–395 is acetyltransferase (AT) domain; that stretch reads LYACFGGQGP…LEGTGMNVVN (379 aa). Residues 446–692 are enoyl reductase (ER) domain; sequence TRLLGTPHVM…LIVEAPGVKD (247 aa). Residues 1009-1509 are dehydratase (DH) domain; it reads GECAWGYAAL…RANDRLRMEI (501 aa). The MaoC-like domain maps to 1398-1532; it reads FLNRHGAPRV…VRVLKESTGE (135 aa). Residues 1548 to 1900 form a malonyl/palmitoyl transferase (MT/PT) domain region; that stretch reads YVFTGQGTQE…IRLVQGVTQS (353 aa).

Belongs to the fungal fatty acid synthetase subunit beta family. In terms of assembly, [Alpha(6)beta(6)] hexamers of two multifunctional subunits (alpha and beta).

It carries out the reaction acetyl-CoA + n malonyl-CoA + 2n NADPH + 4n H(+) = a long-chain-acyl-CoA + n CoA + n CO2 + 2n NADP(+).. It catalyses the reaction holo-[ACP] + acetyl-CoA = acetyl-[ACP] + CoA. The enzyme catalyses holo-[ACP] + malonyl-CoA = malonyl-[ACP] + CoA. The catalysed reaction is a (3R)-hydroxyacyl-[ACP] = a (2E)-enoyl-[ACP] + H2O. It carries out the reaction a 2,3-saturated acyl-[ACP] + NAD(+) = a (2E)-enoyl-[ACP] + NADH + H(+). It catalyses the reaction (9Z)-octadecenoyl-[ACP] + H2O = (9Z)-octadecenoate + holo-[ACP] + H(+). It functions in the pathway mycotoxin biosynthesis; sterigmatocystin biosynthesis. Fatty acid synthase beta subunit; part of the gene cluster that mediates the biosynthesis of sterigmatocystin (ST), a polyketide-derived furanocoumarin which is part of the most toxic and carcinogenic compounds among the known mycotoxins. The first step in the biosynthesis of sterigmatocystin is the production of hexanoate by the fatty acid synthase (FAS) units stcJ and stcK. The polyketide backbone is assembled by the non-reducing polyketide synthase stcA by condensation of the starter hexanoyl-CoA and 7 malonyl-CoA extender units followed by cyclization and release of norsolorinic acid. Norsolorinic acid is the first stable intermediate in the biosynthesis of sterigmatocystin and is converted into averantin (AVN) by the ketoreductase stcE which reduces the hexanoate ketone to an alcohol. Averantin is then oxidized into 5'-hydroxyaverantin (HAVN) by the cytochrome P450 monooxygenase stcF. 5'-hydroxyaverantin is further converted to 5'-oxyaverantin (OAVN) by the 5'-hydroxyaverantin dehydrogenase stcG. The next step is the conversion of OAVN into averufin (AVF) which is catalyzed by a yet to be identified enzyme. The cytochrome P450 monooxygenase stcB and the flavin-binding monooxygenase stcW are both required for the conversion of averufin to 1-hydroxyversicolorone. The esterase stcI probably catalyzes the formation of versiconal hemiacetal acetate from 1-hydroxyversicolorone. The oxydoreductase stcN then probably catalyzes the biosynthetic step from versiconal to versicolorin B (VERB). The next step is performed by the versicolorin B desaturase stcL to produce versicolorin A (VERA). The ketoreductase stcU and the cytochrome P450 monooxygenase stcS are involved in the conversion of versicolorin A to demethylsterigmatocystin. The Baeyer-Villiger oxidas stcQ and the reductase stcR might be involved in the biosynthetic step from versicolorin A to demethylsterigmatocystin. The final step in the biosynthesis of sterigmatocystin is the methylation of demethylsterigmatocystin catalyzed by the methyltransferase stcP. The polypeptide is Fatty acid synthase beta subunit stcK (Emericella nidulans (strain FGSC A4 / ATCC 38163 / CBS 112.46 / NRRL 194 / M139) (Aspergillus nidulans)).